The sequence spans 283 residues: MTVQTSKNPQVDIAEDNAFFPSEYSLSQYTSPVSDLDGVDYPKPYRGKHKILVIAADERYLPTDNGKLFSTGNHPIETLLPLYHLHAAGFEFEVATISGLMTKFEYWAMPQKDEKVMPFFEQHKSLFRNPKKLADVVASLNADSEYAAIFVPGGHGALIGLPESQDVAAALQWAIKNDRFVISLCHGPAAFLALRHGDNPLNGYSICAFPDAADKQTPEIGYMPGHLTWYFGEELKKMGMNIINDDITGRVHKDRKLLTGDSPFAANALGKLAAQEMLAAYAG.

Residues histidine 86, glutamate 91, and histidine 123 each contribute to the Zn(2+) site. The Nucleophile role is filled by cysteine 185.

This sequence belongs to the peptidase C56 family. HchA subfamily. In terms of assembly, homodimer.

It is found in the cytoplasm. It catalyses the reaction N(omega)-(1-hydroxy-2-oxopropyl)-L-arginyl-[protein] + H2O = lactate + L-arginyl-[protein] + H(+). It carries out the reaction N(6)-(1-hydroxy-2-oxopropyl)-L-lysyl-[protein] + H2O = lactate + L-lysyl-[protein] + H(+). The catalysed reaction is S-(1-hydroxy-2-oxopropyl)-L-cysteinyl-[protein] + H2O = lactate + L-cysteinyl-[protein] + H(+). The enzyme catalyses N(omega)-(1-hydroxy-2-oxoethyl)-L-arginyl-[protein] + H2O = L-arginyl-[protein] + glycolate + H(+). It catalyses the reaction N(6)-(1-hydroxy-2-oxoethyl)-L-lysyl-[protein] + H2O = glycolate + L-lysyl-[protein] + H(+). It carries out the reaction S-(1-hydroxy-2-oxoethyl)-L-cysteinyl-[protein] + H2O = glycolate + L-cysteinyl-[protein] + H(+). The catalysed reaction is N(2)-(1-hydroxy-2-oxopropyl)-dGTP + H2O = lactate + dGTP + H(+). The enzyme catalyses N(2)-(1-hydroxy-2-oxopropyl)-GTP + H2O = lactate + GTP + H(+). It catalyses the reaction N(2)-(1-hydroxy-2-oxopropyl)-GDP + H2O = lactate + GDP + H(+). It carries out the reaction N(2)-(1-hydroxy-2-oxopropyl)-GMP + H2O = lactate + GMP + H(+). The catalysed reaction is N(2)-(1-hydroxy-2-oxoethyl)-dGTP + H2O = dGTP + glycolate + H(+). The enzyme catalyses N(2)-(1-hydroxy-2-oxoethyl)-GTP + H2O = glycolate + GTP + H(+). It catalyses the reaction N(2)-(1-hydroxy-2-oxoethyl)-GDP + H2O = glycolate + GDP + H(+). It carries out the reaction N(2)-(1-hydroxy-2-oxoethyl)-GMP + H2O = glycolate + GMP + H(+). The catalysed reaction is an N(2)-(1-hydroxy-2-oxopropyl)-guanosine in RNA + H2O = a guanosine in RNA + lactate + H(+). The enzyme catalyses an N(2)-(1-hydroxy-2-oxopropyl)-2'-deoxyguanosine in DNA + H2O = a 2'-deoxyguanosine in DNA + lactate + H(+). It catalyses the reaction an N(2)-(1-hydroxy-2-oxoethyl)-guanosine in RNA + H2O = a guanosine in RNA + glycolate + H(+). It carries out the reaction an N(2)-(1-hydroxy-2-oxoethyl)-2'-deoxyguanosine in DNA + H2O = a 2'-deoxyguanosine in DNA + glycolate + H(+). In terms of biological role, protein and nucleotide deglycase that catalyzes the deglycation of the Maillard adducts formed between amino groups of proteins or nucleotides and reactive carbonyl groups of glyoxals. Thus, functions as a protein deglycase that repairs methylglyoxal- and glyoxal-glycated proteins, and releases repaired proteins and lactate or glycolate, respectively. Deglycates cysteine, arginine and lysine residues in proteins, and thus reactivates these proteins by reversing glycation by glyoxals. Acts on early glycation intermediates (hemithioacetals and aminocarbinols), preventing the formation of Schiff bases and advanced glycation endproducts (AGE). Also functions as a nucleotide deglycase able to repair glycated guanine in the free nucleotide pool (GTP, GDP, GMP, dGTP) and in DNA and RNA. Is thus involved in a major nucleotide repair system named guanine glycation repair (GG repair), dedicated to reversing methylglyoxal and glyoxal damage via nucleotide sanitization and direct nucleic acid repair. Plays an important role in protecting cells from carbonyl stress. The polypeptide is Protein/nucleic acid deglycase HchA (Escherichia coli O157:H7).